Consider the following 349-residue polypeptide: Dihydroorotate dehydrogenase (quinone) (349 aa).

FMN contacts are provided by residues 59-63 and T83; that span reads PGFDK. K63 contributes to the substrate binding site. 108–112 is a binding site for substrate; it reads NRMGF. FMN-binding residues include N142 and N173. N173 is a substrate binding site. S176 acts as the Nucleophile in catalysis. Position 178 (N178) interacts with substrate. The FMN site is built by K212 and S240. A substrate-binding site is contributed by 241–242; that stretch reads NT. FMN contacts are provided by residues G262, G291, and 312 to 313; that span reads YS.

Belongs to the dihydroorotate dehydrogenase family. Type 2 subfamily. In terms of assembly, monomer. It depends on FMN as a cofactor.

The protein resides in the cell membrane. The enzyme catalyses (S)-dihydroorotate + a quinone = orotate + a quinol. It participates in pyrimidine metabolism; UMP biosynthesis via de novo pathway; orotate from (S)-dihydroorotate (quinone route): step 1/1. Functionally, catalyzes the conversion of dihydroorotate to orotate with quinone as electron acceptor. The sequence is that of Dihydroorotate dehydrogenase (quinone) from Novosphingobium aromaticivorans (strain ATCC 700278 / DSM 12444 / CCUG 56034 / CIP 105152 / NBRC 16084 / F199).